A 212-amino-acid polypeptide reads, in one-letter code: External core antigen (212 aa).

The signal sequence occupies residues 1–19 (MQLFHLCLIISCSCPTVQA). The interval 25-27 (GWL) is HBEAG. Positions 165 to 212 (NAPILSTLPETTVVRRRGRSPRRRTPSPRRRRSQSPRRRRSQSRESQC) are disordered. Positions 178–205 (VRRRGRSPRRRTPSPRRRRSQSPRRRRS) are enriched in basic residues. A 1; half-length repeat occupies 184–190 (SPRRRTP). The segment at 184–206 (SPRRRTPSPRRRRSQSPRRRRSQ) is 3 X 8 AA repeats of S-P-R-R-R-R-S-Q. Positions 184 to 212 (SPRRRTPSPRRRRSQSPRRRRSQSRESQC) are excised as a propeptide. 2 consecutive repeat copies span residues 191–198 (SPRRRRSQ) and 199–206 (SPRRRRSQ).

It belongs to the orthohepadnavirus precore antigen family. In terms of assembly, homodimerizes. Phosphorylated. In terms of processing, cleaved by host furin.

The protein localises to the secreted. It localises to the host nucleus. Its function is as follows. May regulate immune response to the intracellular capsid in acting as a T-cell tolerogen, by having an immunoregulatory effect which prevents destruction of infected cells by cytotoxic T-cells. This immune regulation may predispose to chronicity during perinatal infections and prevent severe liver injury during adult infections. The sequence is that of External core antigen from Homo sapiens (Human).